Here is a 601-residue protein sequence, read N- to C-terminus: Dual specificity tyrosine-phosphorylation-regulated kinase 2 (601 aa).

The segment at 1-24 is disordered; the sequence is MLTRKPSAAAPAAYPTGRGGDSAV. Ser-30 carries the post-translational modification Phosphoserine. Thr-106 carries the post-translational modification Phosphothreonine; by ATM. A Nuclear localization signal motif is present at residues 189–191; it reads KKR. The 314-residue stretch at 222–535 folds into the Protein kinase domain; that stretch reads YEVLKVIGKG…PGQALRHPWL (314 aa). Residues 228-236, Lys-251, and 301-304 each bind ATP; these read IGKGSFGQV and FELL. Asp-348 functions as the Proton acceptor in the catalytic mechanism. At Thr-381 the chain carries Phosphothreonine; by MAP3K10. The residue at position 382 (Tyr-382) is a Phosphotyrosine; by autocatalysis. A Phosphoserine; by ATM modification is found at Ser-442. Ser-449 carries the phosphoserine; by MAP3K10 modification.

It belongs to the protein kinase superfamily. CMGC Ser/Thr protein kinase family. MNB/DYRK subfamily. As to quaternary structure, component of an E3 ligase complex containing DYRK2, EDD/UBR5, DDB1 and DCAF1 (EDVP complex). Interacts directly with EDD/UBR5, DDB1 and DCAF1. Interacts with SIAH2 and MDM2. Interacts with MAP3K10 and NFATC1. May also interact with CCNL2. Requires Mg(2+) as cofactor. The cofactor is Mn(2+). Post-translationally, autophosphorylates cotranslationally on the second tyrosine residue in the Tyr-X-Tyr motif in the activation loop, but once mature, does not have any protein tyrosine kinase activity. Phosphorylated at Thr-106 and Ser-442 by ATM in response to genotoxic stress. Under normal conditions, polyubiquitinated in the nucleus by MDM2, leading to its proteasomal degradation. Phosphorylation on Thr-106 and Ser-442 by ATM in response to genotoxic stress disrupts MDM2 binding and prevents MDM2-mediated ubiquitination and subsequent proteasomal degradation. Polyubiquitinated by SIAH2, leading to its proteasomal degradation. Polyubiquitinated by SIAH2 occurs under normal conditions, and is enhanced in response to hypoxia. In terms of tissue distribution, testis, after the onset of spermatogenesis.

The protein localises to the cytoplasm. The protein resides in the nucleus. The enzyme catalyses L-seryl-[protein] + ATP = O-phospho-L-seryl-[protein] + ADP + H(+). The catalysed reaction is L-threonyl-[protein] + ATP = O-phospho-L-threonyl-[protein] + ADP + H(+). It carries out the reaction L-tyrosyl-[protein] + ATP = O-phospho-L-tyrosyl-[protein] + ADP + H(+). With respect to regulation, activated by autophosphorylation on the second tyrosine residue in the Tyr-X-Tyr motif in the activation loop. Inhibited by acridine analogs, purvalanol, and barely by harmine. Inhibited by leucettine and leucettine derivatives. Serine/threonine-protein kinase involved in the regulation of the mitotic cell cycle, cell proliferation, apoptosis, organization of the cytoskeleton and neurite outgrowth. Functions in part via its role in ubiquitin-dependent proteasomal protein degradation. Functions downstream of ATM and phosphorylates p53/TP53 at 'Ser-46', and thereby contributes to the induction of apoptosis in response to DNA damage. Phosphorylates NFATC1, and thereby inhibits its accumulation in the nucleus and its transcription factor activity. Phosphorylates EIF2B5 at 'Ser-544', enabling its subsequent phosphorylation and inhibition by GSK3B. Likewise, phosphorylation of NFATC1, CRMP2/DPYSL2 and CRMP4/DPYSL3 promotes their subsequent phosphorylation by GSK3B. May play a general role in the priming of GSK3 substrates. Inactivates GYS1 by phosphorylation at 'Ser-641', and potentially also a second phosphorylation site, thus regulating glycogen synthesis. Mediates EDVP E3 ligase complex formation and is required for the phosphorylation and subsequent degradation of KATNA1. Phosphorylates TERT at 'Ser-457', promoting TERT ubiquitination by the EDVP complex. Phosphorylates SIAH2, and thereby increases its ubiquitin ligase activity. Promotes the proteasomal degradation of MYC and JUN, and thereby regulates progress through the mitotic cell cycle and cell proliferation. Promotes proteasomal degradation of GLI2 and GLI3, and thereby plays a role in smoothened and sonic hedgehog signaling. Plays a role in cytoskeleton organization and neurite outgrowth via its phosphorylation of DCX and DPYSL2. Phosphorylates CRMP2/DPYSL2, CRMP4/DPYSL3, DCX, EIF2B5, EIF4EBP1, GLI2, GLI3, GYS1, JUN, MDM2, MYC, NFATC1, p53/TP53, TAU/MAPT and KATNA1. Can phosphorylate histone H1, histone H3 and histone H2B (in vitro). Can phosphorylate CARHSP1 (in vitro). This is Dual specificity tyrosine-phosphorylation-regulated kinase 2 (DYRK2) from Homo sapiens (Human).